A 1320-amino-acid chain; its full sequence is Inner centromere protein A (1320 aa).

Disordered regions lie at residues 53–75 (KNSN…NNIS), 426–447 (QEKQ…QPVV), 611–679 (NEPI…VVPP), 701–877 (EEEE…NTAS), and 896–1215 (TKSP…DGDE). Composition is skewed to low complexity over residues 54 to 75 (NSNY…NNIS), 429 to 447 (QQQQ…QPVV), and 615 to 640 (QQPS…SSSS). Residues 221-444 (QQNQFQEQHK…KQQEKQQQQQ (224 aa)) adopt a coiled-coil conformation. The segment covering 653–668 (TIVTSKPTNKVQPQSL) has biased composition (polar residues). Low complexity predominate over residues 669–679 (NSNINNNVVPP). A coiled-coil region spans residues 683–855 (AAIANKLKKQ…QKKKTVQTIL (173 aa)). Positions 701 to 835 (EEEERLRKKQ…QEKEKQEKQK (135 aa)) are enriched in basic and acidic residues. Residues 851-863 (VQTILPTPQTPSR) are compositionally biased toward polar residues. A compositionally biased stretch (low complexity) spans 864 to 877 (SANNNYDDAANTAS). Acidic residues-rich tracts occupy residues 908-926 (DDQD…ENSE) and 934-951 (QDDS…DSDE). Residues 965–977 (NKNKNSNNSNNNN) show a composition bias toward low complexity. Basic and acidic residues predominate over residues 981–1000 (QSRKDKSIVFDSDSLNRNHN). 2 stretches are compositionally biased toward low complexity: residues 1026–1040 (SNMK…YSNS) and 1047–1061 (SPPS…SSES). The segment covering 1062 to 1071 (NDCFSPLTPT) has biased composition (polar residues). A compositionally biased stretch (low complexity) spans 1072-1096 (NNNKINNNKINNNNSNNNSFNNSNS). Polar residues predominate over residues 1120–1136 (SKTSPFLTIRNTPSPLK). Low complexity predominate over residues 1143–1154 (NMSSASSLSSFD). Positions 1155–1170 (SDNDSDYNDNDIDDGE) are enriched in acidic residues. A compositionally biased stretch (polar residues) spans 1175-1187 (PNENFTTPLKNQE). A compositionally biased stretch (low complexity) spans 1188-1198 (NNNNNNSNNSN). Positions 1199–1209 (TQYPIITSPPS) are enriched in polar residues.

The protein belongs to the INCENP family. As to quaternary structure, interacts with aurK.

It is found in the chromosome. It localises to the centromere. Its subcellular location is the cytoplasm. The protein localises to the cytoskeleton. The protein resides in the spindle. It is found in the nucleus. It localises to the cleavage furrow. In terms of biological role, chromosomal passenger protein that seems to be required for chromosome segregation and the onset of cytokinesis during mitosis. Plays a key role in the abscission of daughter cells at the end of cytokinesis and in the establishment or maintenance of a bipolar spindle. In Dictyostelium discoideum (Social amoeba), this protein is Inner centromere protein A (icpA).